The following is a 156-amino-acid chain: MEENNQIVEKITRIVNPFIEEMNLSLVDVEYVQDGGYWYVRIFIENLNGDLNIEDCSKLSSKIEDKVEELIEHKFFLEVSSPGLERPLKKLEDYTRFIGEKITLHLKHKLDDKKQFKTIIKEVNGDNIIFLMDKKEVEIKFNEIRKANILFEFNDF.

This sequence belongs to the RimP family.

The protein localises to the cytoplasm. Functionally, required for maturation of 30S ribosomal subunits. The chain is Ribosome maturation factor RimP from Fusobacterium nucleatum subsp. nucleatum (strain ATCC 25586 / DSM 15643 / BCRC 10681 / CIP 101130 / JCM 8532 / KCTC 2640 / LMG 13131 / VPI 4355).